Reading from the N-terminus, the 789-residue chain is Trimethylamine-oxide aldolase (789 aa).

The protein in the C-terminal section; belongs to the GcvT family.

The catalysed reaction is trimethylamine N-oxide + H(+) = dimethylamine + formaldehyde. Functionally, catalyzes the conversion of trimethylamine N-oxide (TMAO) to dimethylamine (DMA) and formaldehyde. This Ruegeria pomeroyi (strain ATCC 700808 / DSM 15171 / DSS-3) (Silicibacter pomeroyi) protein is Trimethylamine-oxide aldolase.